We begin with the raw amino-acid sequence, 124 residues long: Ribosome-binding factor A (124 aa).

This sequence belongs to the RbfA family. In terms of assembly, monomer. Binds 30S ribosomal subunits, but not 50S ribosomal subunits or 70S ribosomes.

It is found in the cytoplasm. One of several proteins that assist in the late maturation steps of the functional core of the 30S ribosomal subunit. Associates with free 30S ribosomal subunits (but not with 30S subunits that are part of 70S ribosomes or polysomes). Required for efficient processing of 16S rRNA. May interact with the 5'-terminal helix region of 16S rRNA. The chain is Ribosome-binding factor A from Buchnera aphidicola subsp. Schizaphis graminum (strain Sg).